The following is a 152-amino-acid chain: UPF0225 protein YchJ (152 aa).

Belongs to the UPF0225 family.

This is UPF0225 protein YchJ from Shigella boydii serotype 18 (strain CDC 3083-94 / BS512).